A 216-amino-acid chain; its full sequence is Fibroblast growth factor 17 (216 aa).

The signal sequence occupies residues 1-22; the sequence is MGAARLLPNLTLCLQLLILCCQ. Asparagine 137 is a glycosylation site (N-linked (GlcNAc...) asparagine). The interval 190–216 is disordered; it reads EKQKQFEFVGSAPTRRTKRTRRPQPLT. Residues 204-216 show a composition bias toward basic residues; it reads RRTKRTRRPQPLT.

Belongs to the heparin-binding growth factors family. As to quaternary structure, interacts with FGFR3 and FGFR4. In terms of tissue distribution, preferentially expressed in the embryonic brain.

It localises to the secreted. Functionally, plays an important role in the regulation of embryonic development and as signaling molecule in the induction and patterning of the embryonic brain. Required for normal brain development. The polypeptide is Fibroblast growth factor 17 (FGF17) (Homo sapiens (Human)).